Consider the following 81-residue polypeptide: Elicitor peptide 4 (81 aa).

The propeptide occupies 1 to 54; sequence MERGVSYYLWIPFKFIHQTFGSLLLKLLGLRSPSDHSFPEDGEEEVKVVEVSSR. Positions 57 to 81 are disordered; that stretch reads PGKKNVLKKSRESSGKPGGTNKKPF.

It belongs to the brassicaceae elicitor peptide family.

In terms of biological role, elicitor of plant defense. This is Elicitor peptide 4 (PEP4) from Arabidopsis thaliana (Mouse-ear cress).